The following is a 181-amino-acid chain: UPF0228 protein MA_3117 (181 aa).

It belongs to the UPF0228 family.

In Methanosarcina acetivorans (strain ATCC 35395 / DSM 2834 / JCM 12185 / C2A), this protein is UPF0228 protein MA_3117.